Reading from the N-terminus, the 124-residue chain is NLLQFEKMIKKMTGKEPVVSYAFYGCYCGSGGQGKPKDATDRCCFVHDCCYGKVTGCDPKMDVYSFSEENGDIVCGGDDPCKKEICECDRAAAICFRDNLNTYNDKKYWAFGAKNCPQEESEAC.

Intrachain disulfides connect Cys26–Cys116, Cys28–Cys44, Cys43–Cys95, Cys49–Cys124, Cys50–Cys88, Cys57–Cys81, and Cys75–Cys86. Ca(2+)-binding residues include Tyr27, Gly29, and Gly31. Residue His47 is part of the active site. Position 48 (Asp48) interacts with Ca(2+). Asp89 is an active-site residue.

This sequence belongs to the phospholipase A2 family. Group II subfamily. D49 sub-subfamily. The cofactor is Ca(2+). In terms of tissue distribution, expressed by the venom gland.

The protein localises to the secreted. It carries out the reaction a 1,2-diacyl-sn-glycero-3-phosphocholine + H2O = a 1-acyl-sn-glycero-3-phosphocholine + a fatty acid + H(+). Functionally, PLA2 catalyzes the calcium-dependent hydrolysis of the 2-acyl groups in 3-sn-phosphoglycerides. The sequence is that of Acidic phospholipase A2 BA2 from Gloydius halys (Chinese water mocassin).